We begin with the raw amino-acid sequence, 212 residues long: MKGTFLVLRRVRGGDVDLVATLYGTAGKVSLFLREGYLNEKKLFGVFEPFNLVKIDYYQSSGLIIPRDVLEVKRFSYFAKDVKRYFLMSYISQTVLRHINFYDEELFSLILRFFLKETKNPEASYFKFFLNLLKTLGYEPLFLRERVRGRYAFLDLEKGSLSSSGVKVRSSLLNLLKKIHQLEEYERIKIKRKDFEEGREILEKFLSFHLNR.

This is an uncharacterized protein from Aquifex aeolicus (strain VF5).